Reading from the N-terminus, the 468-residue chain is ATP synthase subunit beta (468 aa).

148 to 155 contacts ATP; that stretch reads GGAGVGKT.

Belongs to the ATPase alpha/beta chains family. In terms of assembly, F-type ATPases have 2 components, CF(1) - the catalytic core - and CF(0) - the membrane proton channel. CF(1) has five subunits: alpha(3), beta(3), gamma(1), delta(1), epsilon(1). CF(0) has three main subunits: a(1), b(2) and c(9-12). The alpha and beta chains form an alternating ring which encloses part of the gamma chain. CF(1) is attached to CF(0) by a central stalk formed by the gamma and epsilon chains, while a peripheral stalk is formed by the delta and b chains.

The protein localises to the cell inner membrane. It carries out the reaction ATP + H2O + 4 H(+)(in) = ADP + phosphate + 5 H(+)(out). Produces ATP from ADP in the presence of a proton gradient across the membrane. The catalytic sites are hosted primarily by the beta subunits. This is ATP synthase subunit beta from Xanthomonas axonopodis pv. citri (strain 306).